The chain runs to 1714 residues: MSIKLKANLNNPPISGLATAHLINGTVPVEIVWSKEETSLQFPDNRLLVCHSNNDVLRALARAAPDYKLYGETAIERTQIDHWLSFSLTCEDDISWALSFLDKSIAPVTYLVANKLTIADFALFNEMHSRYEFLAAKGIPQHVQRWYDLITAQPLIQKVLQSLPEDAKVKRSPQSSKEQTPAKTGERKQEGKFVDLPGAEMGKVVVRFPPEASGYLHIGHAKAALLNQYYALAFQGTLIMRFDDTNPAKETVEFENVILGDLEQLQIKPDVFTHTSNYFDLMLDYCVRLIKESKAYVDDTPPEQMKLEREQRVESANRSNSVEKNLSLWEEMVKGSEKGQKYCVRAKIDMSSPNGCMRDPTIYRCKNEPHPRTGTKYKVYPTYDFACPIVDAIENVTHTLRTTEYHDRDDQFYWFIDALKLRKPYIWSYSRLNMTNTVLSKRKLTWFVDSGLVDGWDDPRFPTVRGIIRRGMTVEGLKEFIIAQGSSKSVVFMNWDKIWAFNKKVIDPIAPRYTALEKEKRVIVNVAGAKVERIQVSVHPKDESLGKKTVLLGPRIYIDYVDAEALKEGENATFINWGNILIRKVNKDASGNITSVDAALNLENKDFKKTLKLTWLAVEDDPSAYPPTFCVYFDNIISKAVLGKDEDFKQFIGHKTRDEVPMLGDPELKKCKKGDIIQLQRRGFFKVDVAYAPPSGYTNVPSPIVLFSIPDGHTKDVPTSGLKVNAPDAKATKKASSPVSSSGQASELDSQISQQGDLVRDLKSKKAAKDQIDVAVKKLLALKADYKSATGKDWKPGQTSASSAPVPAASSSSANDAVSVNASIVKQGDLVRDLKGKKASKPEIDAAVKTLLELKAQYKTLTGQDWKPGTVPTTAAPSASAAPSVGVNDSVAQILSQITAQGDKVRELKSAKADKATVDAAVKTLLSLKADYKAATGSDWKPGTTAPAPAAAPVKVKQEKNPDPASVLTVNTLLNKIAQQGDKIRQLKSAKSEKSLVEAEVKLLLALKTDYKSLTGQEWKPGTVAPAPTTVNVIDLTGGDSGSDVGSVLSKIQAQGDKIRKLKSEKAAKNVIDPEVKTLLALKGEYKTLSGKDWTPDAKSEPAVVKKEASPVSMASPAKDELTQEINAQGEKVRAAKGNKAAKEVIDAEVAKLLALKAKYKEVTGTDFPVAGRGGGGGGGSAKKAPKEAQPKPAKPVKKEPAADASGAVKKQTRLGLEATKEDNLPDWYSQVITKGEMIEYYDVSGCYILRQWSFAIWKAIKTWFDAEITRMGVKECYFPIFVSKAVLEKEKTHIADFAPEVAWVTKSGDSDLAEPIAVRPTSETVMYPAYAKWVQSYRDLPIRLNQWNNVVRWEFKQPTPFLRTREFLWQEGHTAFADKEEAAKEVLDILDLYALVYTHLLAIPVVKGRKTEKEKFAGGDYTTTVEAFISASGRAIQGATSHHLGQNFSKMFEIVYEDPETQQKKYVYQNSWGITTRTIGVMIMVHADNQGLVLPPHVACIQAIVVPCGITVNTKDDERAQLLDACKALEKRLVGGGVRCEGDYRDNYSPGWKFNHWELKGVPLRLEVGPKDLKAQQLVAVRRDTVEKITIPLADVEKKIPALLETIHESMLNKAQEDMTSHTKKVTNWTDFCGFLEQKNILLAPFCGEISCEDKIKADSARGEEAEPGAPAMGAKSLCIPFDQPAPIAASDKCINPSCTNKPKFYTLFGRSY.

The interval 166 to 191 is disordered; the sequence is DAKVKRSPQSSKEQTPAKTGERKQEG. The interval 170–754 is glutamate--tRNA ligase; that stretch reads KRSPQSSKEQ…ASELDSQISQ (585 aa). Residues 172 to 182 show a composition bias toward polar residues; it reads SPQSSKEQTPA. The short motif at 209-220 is the 'HIGH' region element; that stretch reads PPEASGYLHIGH. The short motif at 438–442 is the 'KMSKS' region element; sequence VLSKR. 3 disordered regions span residues 718 to 754, 791 to 817, and 943 to 962; these read PTSGLKVNAPDAKATKKASSPVSSSGQASELDSQISQ, GKDWKPGQTSASSAPVPAASSSSANDA, and GTTAPAPAAAPVKVKQEKNP. Composition is skewed to low complexity over residues 734 to 746 and 800 to 817; these read KASSPVSSSGQAS and SASSAPVPAASSSSANDA. 5 consecutive WHEP-TRS domains span residues 744-800, 816-872, 890-946, 969-1025, and 1044-1100; these read QASE…GQTS, DAVS…GTVP, SVAQ…GTTA, TVNT…GTVA, and DVGS…DAKS. A 6 X 57 AA approximate repeats region spans residues 755 to 1201; it reads QGDLVRDLKS…KPAKPVKKEP (447 aa). Disordered stretches follow at residues 1093 to 1119 and 1168 to 1210; these read DWTPDAKSEPAVVKKEASPVSMASPAK and FPVA…GAVK. Residues 1094–1109 show a composition bias toward basic and acidic residues; sequence WTPDAKSEPAVVKKEA. S1110 bears the Phosphoserine mark. Residues 1118–1174 form the WHEP-TRS 6 domain; the sequence is AKDELTQEINAQGEKVRAAKGNKAAKEVIDAEVAKLLALKAKYKEVTGTDFPVAGRG. A compositionally biased stretch (gly residues) spans 1172–1181; that stretch reads GRGGGGGGGS. The segment at 1207 to 1714 is proline--tRNA ligase; the sequence is GAVKKQTRLG…KFYTLFGRSY (508 aa). L-proline-binding positions include 1322 to 1324 and R1353; that span reads TSE. 6 residues coordinate ATP: R1353, E1355, R1364, T1365, Q1438, and T1441. Q1438 is a binding site for Mg(2+). L-proline is bound at residue H1443. Residues T1476 and R1478 each contribute to the ATP site. Zn(2+)-binding residues include C1648, C1653, and C1695.

It in the N-terminal section; belongs to the class-I aminoacyl-tRNA synthetase family. Glutamate--tRNA ligase type 2 subfamily. In the C-terminal section; belongs to the class-II aminoacyl-tRNA synthetase family. Component of the multisynthetase complex which is comprised of a bifunctional glutamyl-prolyl-tRNA synthetase, the monospecific isoleucyl, leucyl, glutaminyl, methionyl, lysyl, arginyl, and aspartyl-tRNA synthetases as well as three auxiliary proteins, p18, p48 and p43.

It carries out the reaction tRNA(Glu) + L-glutamate + ATP = L-glutamyl-tRNA(Glu) + AMP + diphosphate. The catalysed reaction is tRNA(Pro) + L-proline + ATP = L-prolyl-tRNA(Pro) + AMP + diphosphate. Functionally, catalyzes the attachment of both L-glutamate and L-proline to their cognate tRNAs in a two-step reaction where the amino acid is first activated by ATP to form a covalent intermediate with AMP. Subsequently, the activated amino acid is transferred to the acceptor end of the cognate tRNA to form L-glutamyl-tRNA(Glu) and L-prolyl-tRNA(Pro). This chain is Bifunctional glutamate/proline--tRNA ligase, found in Drosophila melanogaster (Fruit fly).